We begin with the raw amino-acid sequence, 794 residues long: ALG-2 interacting protein X (794 aa).

The BRO1 domain maps to 1–385 (MLSIERKRTE…DNIEFHNQSA (385 aa)). Coiled coils occupy residues 499-568 (SFIR…LCKK) and 600-655 (LNES…NLDE). Residues 695–794 (GVNPHSPLTS…PPYNSNNKHY (100 aa)) form a disordered region. Residues 698–712 (PHSPLTSPSPSLQSP) are compositionally biased toward low complexity. The segment covering 713–722 (VNNYPNQFSS) has biased composition (polar residues). 2 stretches are compositionally biased toward low complexity: residues 723-742 (PQYH…YVPS) and 749-764 (YSYN…QFGG). Positions 765-787 (PLPPPQSFSAPPPPQSFTAPPPY) are enriched in pro residues.

As to quaternary structure, self-associates; the interaction is calcium-independent Interacts with pefa; the interaction is calcium-dependent. Interacts with pefb; the interaction is calcium-dependent.

Its subcellular location is the cytoplasm. The protein localises to the cytoplasmic vesicle membrane. It is found in the endosome. Functionally, unknown. Required for development but not for cell death. The chain is ALG-2 interacting protein X (alxA) from Dictyostelium discoideum (Social amoeba).